A 255-amino-acid polypeptide reads, in one-letter code: Placenta-expressed transcript 1 protein (255 aa).

An N-terminal signal peptide occupies residues 1–26 (MPALRTLLPHLGLFLCLALCFSPSFS). N57, N67, and N126 each carry an N-linked (GlcNAc...) asparagine glycan. S236 carries GPI-anchor amidated serine lipidation. Residues 237–255 (PLAGALHILLVFLISKLLF) constitute a propeptide, removed in mature form.

Post-translationally, N-glycosylated. In terms of processing, GPI-anchored.

It is found in the apical cell membrane. In terms of biological role, modulates leading keratinocyte migration and cellular adhesion to matrix proteins during a wound-healing response and promotes wound repair. May play a role during trichilemmal differentiation of the hair follicle. The chain is Placenta-expressed transcript 1 protein (Plet1) from Rattus norvegicus (Rat).